The sequence spans 200 residues: Holliday junction branch migration complex subunit RuvA (200 aa).

Residues 1 to 64 form a domain I region; sequence MIGRIVGTLI…EDSHTLYGFI (64 aa). A domain II region spans residues 65 to 143; that stretch reads DKNERALFRV…QAAKTDLFSA (79 aa). A flexible linker region spans residues 144–149; sequence PAVLRQ. The tract at residues 150 to 200 is domain III; the sequence is VQADPRQEAEAALISLGYKPQEAAKAIAGVPVDAANSEDVIKAALKGMLRK.

Belongs to the RuvA family. In terms of assembly, homotetramer. Forms an RuvA(8)-RuvB(12)-Holliday junction (HJ) complex. HJ DNA is sandwiched between 2 RuvA tetramers; dsDNA enters through RuvA and exits via RuvB. An RuvB hexamer assembles on each DNA strand where it exits the tetramer. Each RuvB hexamer is contacted by two RuvA subunits (via domain III) on 2 adjacent RuvB subunits; this complex drives branch migration. In the full resolvosome a probable DNA-RuvA(4)-RuvB(12)-RuvC(2) complex forms which resolves the HJ.

The protein resides in the cytoplasm. Functionally, the RuvA-RuvB-RuvC complex processes Holliday junction (HJ) DNA during genetic recombination and DNA repair, while the RuvA-RuvB complex plays an important role in the rescue of blocked DNA replication forks via replication fork reversal (RFR). RuvA specifically binds to HJ cruciform DNA, conferring on it an open structure. The RuvB hexamer acts as an ATP-dependent pump, pulling dsDNA into and through the RuvAB complex. HJ branch migration allows RuvC to scan DNA until it finds its consensus sequence, where it cleaves and resolves the cruciform DNA. In Marinomonas sp. (strain MWYL1), this protein is Holliday junction branch migration complex subunit RuvA.